The chain runs to 276 residues: CTD small phosphatase-like protein (276 aa).

The interval 1-25 (MDGPAIITQVTNPKEDEGRLPGAGE) is disordered. The FCP1 homology domain maps to 102-260 (LDYGKKCVVI…LDLIPFFEGL (159 aa)). Asp112 acts as the 4-aspartylphosphate intermediate in catalysis. Residues Asp112, Asp114, and Asn223 each contribute to the Mg(2+) site. The Proton donor role is filled by Asp114.

Interacts with REST. Monomer. It depends on Mg(2+) as a cofactor. As to expression, expression is restricted to non-neuronal tissues.

The protein resides in the nucleus. The enzyme catalyses O-phospho-L-seryl-[protein] + H2O = L-seryl-[protein] + phosphate. It carries out the reaction O-phospho-L-threonyl-[protein] + H2O = L-threonyl-[protein] + phosphate. Its function is as follows. Recruited by REST to neuronal genes that contain RE-1 elements, leading to neuronal gene silencing in non-neuronal cells. Preferentially catalyzes the dephosphorylation of 'Ser-5' within the tandem 7 residue repeats in the C-terminal domain (CTD) of the largest RNA polymerase II subunit POLR2A. Negatively regulates RNA polymerase II transcription, possibly by controlling the transition from initiation/capping to processive transcript elongation. The protein is CTD small phosphatase-like protein (CTDSPL) of Homo sapiens (Human).